Reading from the N-terminus, the 356-residue chain is uncharacterized protein (356 aa).

A helical membrane pass occupies residues 8 to 28 (ILGFVLFVLGAAIFLTEVMHS).

To C.elegans C41C4.1 and C18B2.1.

It is found in the membrane. This is an uncharacterized protein from Caenorhabditis elegans.